Consider the following 129-residue polypeptide: Small ribosomal subunit protein uS11 (129 aa).

The protein belongs to the universal ribosomal protein uS11 family. As to quaternary structure, part of the 30S ribosomal subunit. Interacts with proteins S7 and S18. Binds to IF-3.

In terms of biological role, located on the platform of the 30S subunit, it bridges several disparate RNA helices of the 16S rRNA. Forms part of the Shine-Dalgarno cleft in the 70S ribosome. The chain is Small ribosomal subunit protein uS11 from Escherichia fergusonii (strain ATCC 35469 / DSM 13698 / CCUG 18766 / IAM 14443 / JCM 21226 / LMG 7866 / NBRC 102419 / NCTC 12128 / CDC 0568-73).